We begin with the raw amino-acid sequence, 395 residues long: Cuticlin-5 (395 aa).

The N-terminal stretch at 1 to 18 is a signal peptide; that stretch reads MNFILAVFAIILLQAVRG. Residues 19–358 lie on the Extracellular side of the membrane; sequence EIDNAIVGDP…ELCMTAIGTT (340 aa). A ZP domain is found at 46–291; that stretch reads SCVGNFIIKV…DYCDVPSCPD (246 aa). N-linked (GlcNAc...) asparagine glycosylation is found at Asn-90 and Asn-307. The helical transmembrane segment at 359-379 threads the bilayer; that stretch reads LLVFLNAFLFIISLVSIVHVC. At 380–395 the chain is on the cytoplasmic side; that stretch reads CFRTSPKLEKTKSTML.

The protein resides in the cell membrane. Plays a role in alae formation in L1 and dauer stage larvae. This chain is Cuticlin-5, found in Caenorhabditis elegans.